We begin with the raw amino-acid sequence, 415 residues long: Probable glucan 1,3-beta-glucosidase A (415 aa).

Positions 1–22 are cleaved as a signal peptide; it reads MLSRLSQTALVALSLMTVLTEA. Glu210 serves as the catalytic Proton donor. Intrachain disulfides connect Cys290/Cys414 and Cys315/Cys341. The active-site Nucleophile is Glu307. The disordered stretch occupies residues 335-359; it reads SPRYGDCGNKRQGSSSGLSEQERSD.

Belongs to the glycosyl hydrolase 5 (cellulase A) family. Monomer. Mn(2+) is required as a cofactor.

It localises to the secreted. It catalyses the reaction Successive hydrolysis of beta-D-glucose units from the non-reducing ends of (1-&gt;3)-beta-D-glucans, releasing alpha-glucose.. In terms of biological role, beta-glucanases participate in the metabolism of beta-glucan, the main structural component of the cell wall. It could also function biosynthetically as a transglycosylase. The chain is Probable glucan 1,3-beta-glucosidase A (exgA) from Aspergillus clavatus (strain ATCC 1007 / CBS 513.65 / DSM 816 / NCTC 3887 / NRRL 1 / QM 1276 / 107).